A 1148-amino-acid polypeptide reads, in one-letter code: Alpha-mannosidase 2 (1148 aa).

Over 1-5 the chain is Cytoplasmic; that stretch reads MKLSR. Residues 6–26 traverse the membrane as a helical; Signal-anchor for type II membrane protein segment; that stretch reads QFTVFGSAIFCVVIFSLYLML. At 27–1148 the chain is on the lumenal side; that stretch reads DRGHLDYPRG…EISTSRIRLR (1122 aa). Serine 80 and serine 82 each carry phosphoserine. An N-linked (GlcNAc...) asparagine glycan is attached at asparagine 93. 4 residues coordinate Zn(2+): histidine 174, aspartate 176, aspartate 288, and histidine 568. Residue aspartate 288 is the Nucleophile of the active site. A disordered region spans residues 1121–1148; it reads MHSPPDAQNTSEVSLSPMEISTSRIRLR.

Belongs to the glycosyl hydrolase 38 family. In terms of assembly, homodimer; disulfide-linked. Requires Zn(2+) as cofactor. In terms of processing, glycosylated. Liver.

It localises to the golgi apparatus membrane. The enzyme catalyses N(4)-{beta-D-GlcNAc-(1-&gt;2)-alpha-D-Man-(1-&gt;3)-[alpha-D-Man-(1-&gt;3)-[alpha-D-Man-(1-&gt;6)]-alpha-D-Man-(1-&gt;6)]-beta-D-Man-(1-&gt;4)-beta-D-GlcNAc-(1-&gt;4)-beta-D-GlcNAc}-L-asparaginyl-[protein] + 2 H2O = 2 alpha-D-mannopyranose + an N(4)-{beta-D-GlcNAc-(1-&gt;2)-alpha-D-Man-(1-&gt;3)-[alpha-D-Man-(1-&gt;6)]-beta-D-Man-(1-&gt;4)-beta-D-GlcNAc-(1-&gt;4)-beta-D-GlcNAc}-L-asparaginyl-[protein]. It participates in protein modification; protein glycosylation. Inhibited by swainsonine. Functionally, catalyzes the first committed step in the biosynthesis of complex N-glycans. It controls conversion of high mannose to complex N-glycans; the final hydrolytic step in the N-glycan maturation pathway. The sequence is that of Alpha-mannosidase 2 (Man2a1) from Rattus norvegicus (Rat).